The chain runs to 415 residues: Phosphoglycerate kinase (415 aa).

Substrate is bound by residues 24–26, R43, 66–69, R125, and R165; these read DLN and HLGR. ATP contacts are provided by residues K215, G303, E334, and 363 to 366; that span reads GGDS.

It belongs to the phosphoglycerate kinase family. As to quaternary structure, monomer.

The protein localises to the cytoplasm. It carries out the reaction (2R)-3-phosphoglycerate + ATP = (2R)-3-phospho-glyceroyl phosphate + ADP. It participates in carbohydrate degradation; glycolysis; pyruvate from D-glyceraldehyde 3-phosphate: step 2/5. The chain is Phosphoglycerate kinase from Mycobacterium avium (strain 104).